The sequence spans 148 residues: [Ribosomal protein bS18]-alanine N-acetyltransferase (148 aa).

Residues 2 to 147 (NTISILSTTD…DAIIMALPIS (146 aa)) enclose the N-acetyltransferase domain. Residues 69–71 (IAV) and 77–82 (RRGLGR) each bind acetyl-CoA. Glu103 (proton acceptor) is an active-site residue. Asn108 lines the acetyl-CoA pocket. The active-site Proton donor is Tyr115.

The protein belongs to the acetyltransferase family. RimI subfamily.

The protein resides in the cytoplasm. The enzyme catalyses N-terminal L-alanyl-[ribosomal protein bS18] + acetyl-CoA = N-terminal N(alpha)-acetyl-L-alanyl-[ribosomal protein bS18] + CoA + H(+). Functionally, acetylates the N-terminal alanine of ribosomal protein bS18. In Salmonella typhimurium (strain LT2 / SGSC1412 / ATCC 700720), this protein is [Ribosomal protein bS18]-alanine N-acetyltransferase.